Consider the following 858-residue polypeptide: Sarcolemmal membrane-associated protein (858 aa).

The segment at 1–165 is necessary for targeting to centrosomes; that stretch reads MPSALAIFTC…AANTPSMYSQ (165 aa). At 1–832 the chain is on the cytoplasmic side; sequence MPSALAIFTC…REKGNNKPWP (832 aa). The region spanning 28 to 85 is the FHA domain; the sequence is IKIGRSVARCRPAQNNATFDCKVLSRNHALVWFDHKTSKFYLQDTKSSNGTFINSQRL. S150 is modified (phosphoserine). 2 coiled-coil regions span residues 169–204 and 232–381; these read QLSQ…ASDT and NQTE…ALQV. A compositionally biased stretch (basic and acidic residues) spans 456–470; that stretch reads KLSKEENQAKAKESD. The tract at residues 456 to 492 is disordered; sequence KLSKEENQAKAKESDLSDTLSPSKEKSSDDTTDDAQM. A phosphoserine mark is found at S472 and S476. The stretch at 516–829 forms a coiled coil; sequence QAETEAKQDT…KLLREKGNNK (314 aa). The helical; Anchor for type IV membrane protein transmembrane segment at 833 to 853 threads the bilayer; it reads WMPMVAALVAVTAMVLYVPGL. Topologically, residues 854-858 are extracellular; that stretch reads ARASP.

Belongs to the SLMAP family. As to quaternary structure, homodimer. Interacts with myosin. Interacts with SIKE1 and both associate with the STRIPAK core complex composed of PP2A catalytic and scaffolding subunits, the striatins (PP2A regulatory subunits), the striatin-associated proteins MOB4, STRIP1 and STRIP2, PDCD10 and members of the STE20 kinases, such as STK24 and STK26. Interacts (via FHA domain) with STK3 (when phosphorylated); the interaction associates STK3 with the STRIPAK complex.

Its subcellular location is the cell membrane. The protein localises to the sarcolemma. It is found in the cytoplasm. The protein resides in the cytoskeleton. It localises to the microtubule organizing center. Its subcellular location is the centrosome. The protein localises to the endoplasmic reticulum membrane. It is found in the mitochondrion membrane. Functionally, associates with the striatin-interacting phosphatase and kinase (STRIPAK) core complex, forming the extended (SIKE1:SLMAP)STRIPAK complex. The (SIKE1:SLMAP)STRIPAK complex dephosphorylates STK3 leading to the inhibition of Hippo signaling and the control of cell growth. May play a role during myoblast fusion. The sequence is that of Sarcolemmal membrane-associated protein (Slmap) from Rattus norvegicus (Rat).